Reading from the N-terminus, the 693-residue chain is Adhesion G-protein coupled receptor G1 (693 aa).

The first 25 residues, 1–25, serve as a signal peptide directing secretion; sequence MTPQSLLQTTLFLLSLLFLVQGAHG. 26–33 provides a ligand contact to heparin; it reads RGHREDFR. Over 26–401 the chain is Extracellular; it reads RGHREDFRFC…SVEVDAVHKH (376 aa). Disulfide bonds link cysteine 35/cysteine 91 and cysteine 121/cysteine 177. N-linked (GlcNAc...) asparagine glycans are attached at residues asparagine 39, asparagine 148, and asparagine 171. 190 to 200 is a binding site for heparin; that stretch reads LKHPQKASRRP. One can recognise a GAIN-B domain in the interval 224–395; it reads DMVSFEEDRI…AVLMVSSVEV (172 aa). N-linked (GlcNAc...) asparagine glycans are attached at residues asparagine 234, asparagine 303, asparagine 324, and asparagine 341. Disulfide bonds link cysteine 346-cysteine 377 and cysteine 366-cysteine 379. The GPS stretch occupies residues 346–395; it reads CVFWVEDPTLSSPGHWSSAGCETVRRETQTSCFCNHLTYFAVLMVSSVEV. Positions 384-397 are stachel; that stretch reads YFAVLMVSSVEVDA. A helical transmembrane segment spans residues 402–424; the sequence is YLSLLSYVGCVVSALACLVTIAA. The Cytoplasmic segment spans residues 425-437; sequence YLCSRVPLPCRRK. A helical transmembrane segment spans residues 438 to 460; sequence PRDYTIKVHMNLLLAVFLLDTSF. The Extracellular segment spans residues 461–465; that stretch reads LLSEP. Residues 466–495 traverse the membrane as a helical segment; that stretch reads VALTGSEAGCRASAIFLHFSLLTCLSWMGL. A disulfide bridge links cysteine 475 with cysteine 562. Over 496-510 the chain is Cytoplasmic; it reads EGYNLYRLVVEVFGT. A helical membrane pass occupies residues 511–533; that stretch reads YVPGYLLKLSAMGWGFPIFLVTL. Topologically, residues 534 to 562 are extracellular; that stretch reads VALVDVDNYGPIILAVHRTPEGVIYPSMC. Residues 563 to 588 traverse the membrane as a helical segment; the sequence is WIRDSLVSYITNLGLFSLVFLFNMAM. Topologically, residues 589–602 are cytoplasmic; sequence LATMVVQILRLRPH. A helical transmembrane segment spans residues 603 to 624; sequence TQKWSHVLTLLGLSLVLGLPWA. Topologically, residues 625-628 are extracellular; that stretch reads LIFF. Residues 629 to 654 form a helical membrane-spanning segment; that stretch reads SFASGTFQLVVLYLFSIITSFQGFLI. Over 655 to 693 the chain is Cytoplasmic; that stretch reads FIWYWSMRLQARGGPSPLKSNSDSARLPISSGSTSSSRI. The tract at residues 670–693 is disordered; the sequence is SPLKSNSDSARLPISSGSTSSSRI. Residues 684-693 are compositionally biased toward low complexity; the sequence is SSGSTSSSRI.

It belongs to the G-protein coupled receptor 2 family. LN-TM7 subfamily. Heterodimer of 2 chains generated by proteolytic processing; the large extracellular N-terminal fragment (ADGRG1 NT) and the membrane-bound C-terminal fragment (ADGRG1-CT) predominantly remain associated and non-covalently linked. ADGRG1 NT self-associates in a trans-trans manner; the homophilic interaction enhances receptor signaling. Interacts with TGM2. Interacts with heparin; leading to the reduction of ADGRG1 shedding. Interacts with COL3A1. Part of a GPCR-tetraspanin complex at least consisting of ADGRG1, CD81, eventually CD9, and GNA11 in which CD81 is enhancing the association of ADGRG1 with GNA11. Post-translationally, autoproteolytically cleaved into 2 fragments; the large extracellular N-terminal fragment (ADGRG1 NT) and the membrane-bound C-terminal fragment (ADGRG1 CT) predominantly remain associated and non-covalently linked. Shedding to yield the secreted ADGRG1 N-terminal fragment seems to involve metalloprotease(s). N-glycosylated. Contains sialic acid residues. In terms of processing, ubiquitinated. Undergoes polyubiquitination upon activation. As to expression, widely distributed with highest levels found in thyroid gland, brain and heart. Expressed in a great number of tumor cells. Expression is down-regulated in different tumors from highly metastatic cells.

It localises to the cell membrane. The protein resides in the secreted. The protein localises to the membrane raft. With respect to regulation, forms a heterodimer of 2 chains generated by proteolytic processing that remain associated through non-covalent interactions mediated by the GAIN-B domain. In the inactivated receptor, the Stachel sequence (also named stalk) is embedded in the GAIN-B domain, where it adopts a beta-strand conformation. On activation, the Stachel moves into the 7 transmembrane region and adopts a twisted hook-shaped configuration that forms contacts within the receptor, leading to coupling of a G-alpha protein, which activates signaling. The cleaved GAIN-B and N-terminal domains can then dissociate from the rest of the receptor. In terms of biological role, adhesion G-protein coupled receptor (aGPCR) for steroid hormone 17alpha-hydroxypregnenolone (17-OH), which is involved in cell adhesion and cell-cell interactions. Ligand binding causes a conformation change that triggers signaling via guanine nucleotide-binding proteins (G proteins) and modulates the activity of downstream effectors, such as RhoA pathway. ADGRG1 is coupled to G(12) and/or G(13) G proteins (GNA12 and GNA13, respectively) and mediates the activation Rho small GTPases. Acts as a potent suppressor of ferroptosis: binding to 17-OH-binding initiates signaling that down-regulates CD36 and alleviates ferroptosis-induced liver injury. Ligand-binding also induces cell adhesion activity via association with proteins such as collagen III/COL3A1 and TGM2. Mediates cell matrix adhesion in developing neurons and hematopoietic stem cells. Involved in cortical development, specifically in maintenance of the pial basement membrane integrity and in cortical lamination: association with COL3A1 in the developing brain inhibits neuronal migration via activation of the RhoA pathway. Together with TGM2, acts as a regulator of myelination and myelin repair in oligodendrocyte precursor cells. Acts as a hemostatic sensor of shear force: G protein-coupled receptor signaling is activated in response to shear force in platelets, promoting G(13) G protein signaling, and platelet shape change and aggregation in a COL3A1-dependent manner. Acts as an inhibitor of VEGFA production thereby inhibiting angiogenesis through a signaling pathway mediated by PRKCA. Plays a role in the maintenance of hematopoietic stem cells in bone marrow niche. Plays an essential role in testis development. This is Adhesion G-protein coupled receptor G1 from Homo sapiens (Human).